The sequence spans 264 residues: Putative hydro-lyase cgR_2449 (264 aa).

Belongs to the D-glutamate cyclase family.

The polypeptide is Putative hydro-lyase cgR_2449 (Corynebacterium glutamicum (strain R)).